The following is a 283-amino-acid chain: Bifunctional protein FolD (283 aa).

Residues 159 to 161, Ser-184, and Ile-225 contribute to the NADP(+) site; that span reads GRS.

The protein belongs to the tetrahydrofolate dehydrogenase/cyclohydrolase family. Homodimer.

It carries out the reaction (6R)-5,10-methylene-5,6,7,8-tetrahydrofolate + NADP(+) = (6R)-5,10-methenyltetrahydrofolate + NADPH. The catalysed reaction is (6R)-5,10-methenyltetrahydrofolate + H2O = (6R)-10-formyltetrahydrofolate + H(+). Its pathway is one-carbon metabolism; tetrahydrofolate interconversion. Its function is as follows. Catalyzes the oxidation of 5,10-methylenetetrahydrofolate to 5,10-methenyltetrahydrofolate and then the hydrolysis of 5,10-methenyltetrahydrofolate to 10-formyltetrahydrofolate. This Methanoculleus marisnigri (strain ATCC 35101 / DSM 1498 / JR1) protein is Bifunctional protein FolD.